Here is a 492-residue protein sequence, read N- to C-terminus: 56 kDa U1 small nuclear ribonucleoprotein component (492 aa).

The span at 1-15 shows a compositional bias: basic residues; the sequence is MRPRRRGLAYHHTKP. Disordered stretches follow at residues 1–35 and 300–371; these read MRPR…QRRK and DQFP…NKPG. Residues 18–30 show a composition bias toward polar residues; it reads QLSQGHYPTTSND. The segment covering 310–321 has biased composition (low complexity); the sequence is SNSPSSNSISSS. Residues 329-353 are compositionally biased toward polar residues; the sequence is TSYQTQPQRHAVNKPSNVLNSSNRH.

As to quaternary structure, component of the 18S U1 snRNP particle, a subcomplex of the spliceosome. Interacts with the nuclear cap-binding complex CBC1-CBC2 (yCBC). Directly contacts intronic sequences of substrate pre-RNA.

The protein localises to the nucleus. In terms of biological role, component of the U1 snRNP particle, which recognizes and binds the 5'-splice site of pre-mRNA. Together with other non-snRNP factors, U1 snRNP forms the spliceosomal commitment complex, that targets pre-mRNA to the splicing pathway. The polypeptide is 56 kDa U1 small nuclear ribonucleoprotein component (SNU56) (Saccharomyces cerevisiae (strain ATCC 204508 / S288c) (Baker's yeast)).